The primary structure comprises 555 residues: Membrane protein insertase YidC (555 aa).

The next 5 helical transmembrane spans lie at 7–24 (VLWVIFFMSAVMLYDNWQ), 367–387 (WGWSIVLLTLLIKAVFFPLSA), 437–457 (LPVVIQIPVFISLYWVLLASV), 476–496 (PFFILPVLMAVSMYVQTSLNP), and 511–531 (PIAFSVMFFFFPAGLVLYYVV).

It belongs to the OXA1/ALB3/YidC family. Type 1 subfamily. As to quaternary structure, interacts with the Sec translocase complex via SecD. Specifically interacts with transmembrane segments of nascent integral membrane proteins during membrane integration.

The protein resides in the cell inner membrane. Required for the insertion and/or proper folding and/or complex formation of integral membrane proteins into the membrane. Involved in integration of membrane proteins that insert both dependently and independently of the Sec translocase complex, as well as at least some lipoproteins. Aids folding of multispanning membrane proteins. The chain is Membrane protein insertase YidC from Burkholderia lata (strain ATCC 17760 / DSM 23089 / LMG 22485 / NCIMB 9086 / R18194 / 383).